We begin with the raw amino-acid sequence, 435 residues long: tRNA modification GTPase MnmE (435 aa).

(6S)-5-formyl-5,6,7,8-tetrahydrofolate is bound by residues Arg20, Glu77, and Lys117. The TrmE-type G domain maps to 214-359 (GFKIVIVGAP…FMKELESFCL (146 aa)). GTP contacts are provided by residues 224-229 (NSGKSS), 243-249 (TEEAGTT), and 268-271 (DTAG). Mg(2+) contacts are provided by Ser228 and Thr249. (6S)-5-formyl-5,6,7,8-tetrahydrofolate is bound at residue Lys435.

Belongs to the TRAFAC class TrmE-Era-EngA-EngB-Septin-like GTPase superfamily. TrmE GTPase family. As to quaternary structure, homodimer. Heterotetramer of two MnmE and two MnmG subunits. It depends on K(+) as a cofactor.

It is found in the cytoplasm. Its function is as follows. Exhibits a very high intrinsic GTPase hydrolysis rate. Involved in the addition of a carboxymethylaminomethyl (cmnm) group at the wobble position (U34) of certain tRNAs, forming tRNA-cmnm(5)s(2)U34. The sequence is that of tRNA modification GTPase MnmE from Bartonella henselae (strain ATCC 49882 / DSM 28221 / CCUG 30454 / Houston 1) (Rochalimaea henselae).